Here is a 161-residue protein sequence, read N- to C-terminus: Putative defense protein 2 (161 aa).

The N-terminal stretch at L1–A11 is a signal peptide. Residues Y12–H161 form the Reelin domain. C21 and C98 form a disulfide bridge. An N-linked (GlcNAc...) asparagine glycan is attached at N91.

This sequence belongs to the insect defense protein family.

The protein localises to the secreted. Functionally, may have antimicrobial activity. The chain is Putative defense protein 2 from Antheraea mylitta (Tasar silkworm).